Consider the following 156-residue polypeptide: MPRRGHVPKREVQPDPVYNSELVTRVINKIMLDGKKALAQRIFYEAIDKASAKLGKEPMEVLEGALKNIMPVVETRSRRVGGATYQVPMEVRPERRQALGIRWLVQFARARGERTMVERLAAELVDAFNNTGGAVKKKEEVHRMAEANKPFAHYRW.

Belongs to the universal ribosomal protein uS7 family. In terms of assembly, part of the 30S ribosomal subunit. Contacts proteins S9 and S11.

In terms of biological role, one of the primary rRNA binding proteins, it binds directly to 16S rRNA where it nucleates assembly of the head domain of the 30S subunit. Is located at the subunit interface close to the decoding center, probably blocks exit of the E-site tRNA. This is Small ribosomal subunit protein uS7 from Symbiobacterium thermophilum (strain DSM 24528 / JCM 14929 / IAM 14863 / T).